A 544-amino-acid polypeptide reads, in one-letter code: CTP synthase (544 aa).

The segment at 1-267 (MAKFVFVTGG…CRQVLDVLSL (267 aa)) is amidoligase domain. Ser-13 lines the CTP pocket. A UTP-binding site is contributed by Ser-13. Residues 14-19 (SIGKGI) and Asp-71 contribute to the ATP site. 2 residues coordinate Mg(2+): Asp-71 and Glu-141. Residues 148-150 (DIE), 188-193 (KTKPTQ), and Lys-224 contribute to the CTP site. UTP-binding positions include 188–193 (KTKPTQ) and Lys-224. The Glutamine amidotransferase type-1 domain occupies 292–534 (KVALVGKYVQ…IQAASQRLPQ (243 aa)). An L-glutamine-binding site is contributed by Gly-354. Cys-381 (nucleophile; for glutamine hydrolysis) is an active-site residue. L-glutamine contacts are provided by residues 382-385 (LGMQ), Glu-405, and Arg-462. Active-site residues include His-507 and Glu-509.

It belongs to the CTP synthase family. In terms of assembly, homotetramer.

It catalyses the reaction UTP + L-glutamine + ATP + H2O = CTP + L-glutamate + ADP + phosphate + 2 H(+). The enzyme catalyses L-glutamine + H2O = L-glutamate + NH4(+). The catalysed reaction is UTP + NH4(+) + ATP = CTP + ADP + phosphate + 2 H(+). It functions in the pathway pyrimidine metabolism; CTP biosynthesis via de novo pathway; CTP from UDP: step 2/2. Its activity is regulated as follows. Allosterically activated by GTP, when glutamine is the substrate; GTP has no effect on the reaction when ammonia is the substrate. The allosteric effector GTP functions by stabilizing the protein conformation that binds the tetrahedral intermediate(s) formed during glutamine hydrolysis. Inhibited by the product CTP, via allosteric rather than competitive inhibition. Its function is as follows. Catalyzes the ATP-dependent amination of UTP to CTP with either L-glutamine or ammonia as the source of nitrogen. Regulates intracellular CTP levels through interactions with the four ribonucleotide triphosphates. In Synechococcus sp. (strain RCC307), this protein is CTP synthase.